A 115-amino-acid chain; its full sequence is Insulin (115 aa).

The first 26 residues, 1–26, serve as a signal peptide directing secretion; the sequence is MALSPFLAAVIPLVLLLSRAPPSADT. 3 disulfide bridges follow: C33/C101, C45/C114, and C100/C105. The propeptide at 60–92 is c peptide; that stretch reads DTGALAAFLPLAYAEDNESQDDESIGINEVLKS.

The protein belongs to the insulin family. In terms of assembly, heterodimer of a B chain and an A chain linked by two disulfide bonds.

The protein resides in the secreted. Insulin decreases blood glucose concentration. It increases cell permeability to monosaccharides, amino acids and fatty acids. It accelerates glycolysis, the pentose phosphate cycle, and glycogen synthesis in liver. This chain is Insulin (ins), found in Myxine glutinosa (Atlantic hagfish).